The primary structure comprises 887 residues: Transportin-2 (887 aa).

HEAT repeat units follow at residues G9–K36, F41–Q79, F88–L121, L127–D164, N171–M201, F214–L241, H253–T280, V296–V386, H394–A422, P434–R461, L475–A508, L516–V549, E557–Q595, E603–G654, I665–F696, A704–G737, Q745–P780, Q788–N821, I830–V861, and E864–F884. The region spanning V31 to D99 is the Importin N-terminal domain. Residues T344–D363 are disordered. K852 carries the post-translational modification N6-acetyllysine.

Belongs to the importin beta family. Importin beta-2 subfamily.

The protein localises to the cytoplasm. It localises to the nucleus. Functionally, probably functions in nuclear protein import as nuclear transport receptor. Serves as receptor for nuclear localization signals (NLS) in cargo substrates. Is thought to mediate docking of the importin/substrate complex to the nuclear pore complex (NPC) through binding to nucleoporin and the complex is subsequently translocated through the pore by an energy requiring, Ran-dependent mechanism. At the nucleoplasmic side of the NPC, Ran binds to the importin, the importin/substrate complex dissociates and importin is re-exported from the nucleus to the cytoplasm where GTP hydrolysis releases Ran. The directionality of nuclear import is thought to be conferred by an asymmetric distribution of the GTP- and GDP-bound forms of Ran between the cytoplasm and nucleus. This is Transportin-2 (Tnpo2) from Mus musculus (Mouse).